Consider the following 1389-residue polypeptide: CRISPR-associated endoribonuclease Cas13a (1389 aa).

The segment at Met1–Arg347 is NTD. Arg219 contacts crRNA. 3 binds crRNA regions span residues Tyr330–Lys342, Lys405–Tyr408, and Tyr432–Lys436. Residues Glu348–Thr498 form a helical-1 region. Active-site for pre-crRNA processing residues include Arg438 and Lys441. A crRNA-binding site is contributed by Lys441. The interval Lys471–Arg475 is binds crRNA. Residue Lys489 participates in crRNA binding. Positions Thr499 to Lys636 are HEPN-like fold 1-I. The segment at Thr502 to His509 is binds crRNA. Active-site for target ssRNA cleavage residues include Arg597 and His602. The tract at residues Ala637–Lys828 is helical-2. Residue Gln759 coordinates crRNA. The interval Thr829–Asn899 is HEPN-like fold 1-II. A binds crRNA region spans residues Asn853–Arg858. Trp865 lines the crRNA pocket. 3 coiled-coil regions span residues Thr893–Gln920, Glu968–Ile1046, and Lys1101–Lys1131. The tract at residues Leu900–Glu1170 is linker. The segment at Glu1170–Pro1290 is HEPN-like fold 2. Active-site for target ssRNA cleavage residues include Arg1278 and His1283. Binds crRNA regions lie at residues Thr1311–Ser1316 and Lys1338–Lys1339.

This sequence belongs to the CRISPR-associated endoribonuclease Cas13a family. Monomer. The cofactor is Mg(2+).

RNase activity on target is decreased by EDTA. Target RNA acts as an activator for non-specific ssRNA degradation. CRISPR (clustered regularly interspaced short palindromic repeat), is an adaptive immune system that provides protection against mobile genetic elements (viruses, transposable elements and conjugative plasmids). CRISPR clusters contain sequences complementary to antecedent mobile elements (spacers) and target invading nucleic acids. Unlike many single-component effectors, this CRISPR-Cas system targets RNA. CRISPR clusters are transcribed from pre-CRISPR RNA (crRNA) and processed into crRNA (optimally 28 nucleotides in this system) by this protein. This protein processes pre-crRNA at a 'non-typical' site 1 nucleotide upstream of the pre-crRNA stem-loop; it cleaves pre-crRNA from L.buccalis and L.wadei in a similar fashion, whereas the enzymes from the latter 2 bacteria cleave their own pre-crRNA 3 nt further upstream. When the appropriate target sequences are cloned into the CRISPR array, confers immunity to ssRNA(+) enterobacteria phage MS2. Cleaves linear target ssRNA in a crRNA-dependent fashion, preferentially before U residues; has no activity on partially dsRNA, ssDNA or dsDNA. RNA secondary structure surrounding the target influence the cleavage site and efficiency; unlike other CRISPR-Cas effectors Cas13a cleaves outside of the crRNA binding site. In the presence of a viable RNA target other RNAs are also degraded (called collateral RNA degradation), suggesting this type of CRISPR-Cas might also prevent viral spread by inducing programmed cell death or dormancy. This system has a 3' protospacer flanking site (PFS), it does not cleave when the 3' PFS is G (PFS is equivalent to PAM, the protospacer adjacent motif). Mutations of its active site residues results in an RNA-programmed RNA-binding protein. In Leptotrichia shahii (strain DSM 19757 / CCUG 47503 / CIP 107916 / JCM 16776 / LB37), this protein is CRISPR-associated endoribonuclease Cas13a.